A 239-amino-acid chain; its full sequence is Ribose-5-phosphate isomerase A (239 aa).

Residues 40 to 43 (SGST), 96 to 99 (DGAD), and 110 to 113 (KGGG) contribute to the substrate site. Catalysis depends on Glu-119, which acts as the Proton acceptor. Lys-137 is a substrate binding site.

Belongs to the ribose 5-phosphate isomerase family. In terms of assembly, homodimer.

It catalyses the reaction aldehydo-D-ribose 5-phosphate = D-ribulose 5-phosphate. It participates in carbohydrate degradation; pentose phosphate pathway; D-ribose 5-phosphate from D-ribulose 5-phosphate (non-oxidative stage): step 1/1. Functionally, catalyzes the reversible conversion of ribose-5-phosphate to ribulose 5-phosphate. In Methanococcus maripaludis (strain C6 / ATCC BAA-1332), this protein is Ribose-5-phosphate isomerase A.